The sequence spans 477 residues: UDP-N-acetylmuramate--L-alanine ligase (477 aa).

An ATP-binding site is contributed by 122-128 (GTHGKTT).

It belongs to the MurCDEF family.

The protein localises to the cytoplasm. The enzyme catalyses UDP-N-acetyl-alpha-D-muramate + L-alanine + ATP = UDP-N-acetyl-alpha-D-muramoyl-L-alanine + ADP + phosphate + H(+). It functions in the pathway cell wall biogenesis; peptidoglycan biosynthesis. In terms of biological role, cell wall formation. The sequence is that of UDP-N-acetylmuramate--L-alanine ligase from Xylella fastidiosa (strain M12).